The sequence spans 611 residues: Chaperone protein HtpG (611 aa).

The tract at residues 1 to 326 (MSETLERHAF…TEDLPLNVSR (326 aa)) is a; substrate-binding. The segment at 327–536 (EMLQATPVLA…SGGPDLQMQR (210 aa)) is b. Positions 537–611 (LLRRAGRGFG…RVAAALAAQA (75 aa)) are c.

This sequence belongs to the heat shock protein 90 family. In terms of assembly, homodimer.

Its subcellular location is the cytoplasm. Functionally, molecular chaperone. Has ATPase activity. The sequence is that of Chaperone protein HtpG from Methylobacterium sp. (strain 4-46).